Consider the following 412-residue polypeptide: Divalent metal cation transporter MntH (412 aa).

The Cytoplasmic portion of the chain corresponds to 1–19 (MTNYRVESSSGRAARKTRL). A helical transmembrane segment spans residues 20-39 (ALMGPAFIAAIGYIDPGNFA). Residues 40–51 (TNIQAGASFGYQ) lie on the Periplasmic side of the membrane. A helical transmembrane segment spans residues 52–71 (LLWVVVWANLMAMLIQILSA). Topologically, residues 72 to 95 (KLGIATGKNLAEQIRDHYPRPVVW) are cytoplasmic. The chain crosses the membrane as a helical span at residues 96 to 118 (FYWVQAEIIAMATDLAEFIGAAI). Topologically, residues 119–125 (GFKLILG) are periplasmic. The helical transmembrane segment at 126–145 (VSLLQGAVLTGIATFLILML) threads the bilayer. Residues 146–155 (QRRGQKPLEK) lie on the Cytoplasmic side of the membrane. Residues 156-175 (VIGGLLLFVAAAYIVELIFS) form a helical membrane-spanning segment. The Periplasmic portion of the chain corresponds to 176-196 (QPNLAQLGKGMVIPSLPTSEA). The chain crosses the membrane as a helical span at residues 197-220 (VFLAAGVLGATIMPHVIYLHSSLT). Topologically, residues 221 to 238 (QHLHGGSRQQRYSATKWD) are cytoplasmic. The chain crosses the membrane as a helical span at residues 239 to 258 (VAIAMTIAGFVNLAMMATAA). The Periplasmic portion of the chain corresponds to 259–276 (AAFHFSGHTGVADLDEAY). A helical membrane pass occupies residues 277 to 297 (LTLQPLLSHAAATVFGLSLVA). Residues 298-327 (AGLSSTVVGTLAGQVVMQGFIRFHIPLWVR) are Cytoplasmic-facing. A helical membrane pass occupies residues 328-344 (RTVTMLPSFIVILMGLD). Topologically, residues 345 to 350 (PTRILV) are periplasmic. Residues 351-370 (MSQVLLSFGIALALVPLLIF) traverse the membrane as a helical segment. Residues 371 to 387 (TSDSKLMGDLVNSKRVK) are Cytoplasmic-facing. Residues 388 to 406 (QTGWVIVVLVVALNIWLLV) form a helical membrane-spanning segment. The Periplasmic portion of the chain corresponds to 407 to 412 (GTALGL).

The protein belongs to the NRAMP family.

The protein resides in the cell inner membrane. H(+)-stimulated, divalent metal cation uptake system. The sequence is that of Divalent metal cation transporter MntH from Escherichia coli O9:H4 (strain HS).